The following is a 193-amino-acid chain: Ion-translocating oxidoreductase complex subunit A (193 aa).

The next 6 helical transmembrane spans lie at 5 to 25 (LLLL…FLGL), 39 to 59 (IGMG…SYLV), 67 to 87 (LGIE…VVQF), 102 to 122 (VLGI…VALL), 134 to 154 (IIYG…FSAM), and 171 to 191 (SIAM…TGLV).

This sequence belongs to the NqrDE/RnfAE family. The complex is composed of six subunits: RnfA, RnfB, RnfC, RnfD, RnfE and RnfG.

It localises to the cell inner membrane. Its function is as follows. Part of a membrane-bound complex that couples electron transfer with translocation of ions across the membrane. The sequence is that of Ion-translocating oxidoreductase complex subunit A from Aliivibrio fischeri (strain ATCC 700601 / ES114) (Vibrio fischeri).